A 142-amino-acid chain; its full sequence is Hemoglobin subunit alpha-4 (142 aa).

S1 is subject to N-acetylserine. Positions 1 to 142 constitute a Globin domain; that stretch reads SLSAKDKANV…LALALAEKYR (142 aa). Residue H59 participates in O2 binding. H88 serves as a coordination point for heme b.

The protein belongs to the globin family. Heterotetramer of two alpha chains and two beta chains. Red blood cells.

Its function is as follows. Involved in oxygen transport from gills to the various peripheral tissues. The chain is Hemoglobin subunit alpha-4 (hba4) from Oncorhynchus mykiss (Rainbow trout).